The following is a 108-amino-acid chain: Cell cycle protein GpsB (108 aa).

A coiled-coil region spans residues 32-69; the sequence is LDNVIKDYENFNAQIEALKAENEALKKAKYQARNTVSA.

This sequence belongs to the GpsB family. Forms polymers through the coiled coil domains. Interacts with PBP1, MreC and EzrA.

Its subcellular location is the cytoplasm. Functionally, divisome component that associates with the complex late in its assembly, after the Z-ring is formed, and is dependent on DivIC and PBP2B for its recruitment to the divisome. Together with EzrA, is a key component of the system that regulates PBP1 localization during cell cycle progression. Its main role could be the removal of PBP1 from the cell pole after pole maturation is completed. Also contributes to the recruitment of PBP1 to the division complex. Not essential for septum formation. The polypeptide is Cell cycle protein GpsB (Streptococcus pyogenes serotype M49 (strain NZ131)).